An 882-amino-acid chain; its full sequence is MPALACLRRLCRHVSPQAVLFLLFIFCLFSVFISAYYLYGWKRGLEPSADAPEPDCGDPPPVAPSRLLPLKPVQAATPSRTDPLVLVFVESLYSQLGQEVVAILESSRFKYRTEIAPGKGDMPTLTDKGRGRFALIIYENILKYVNLDAWNRELLDKYCVAYGVGIIGFFKANENSLLSAQLKGFPLFLHSNLGLKDCSINPKSPLLYVTRPSEVEKGVLPGEDWTVFQSNHSTYEPVLLAKTRSSESIPHLGADAGLHAALHATVVQDLGLHDGIQRVLFGNNLNFWLHKLVFVDAVAFLTGKRLSLPLDRYILVDIDDIFVGKEGTRMKVEDVKALFDTQNELRAHIPNFTFNLGYSGKFFHTGTNAEDAGDDLLLSYVKEFWWFPHMWSHMQPHLFHNQSVLAEQMALNKKFAVEHGIPTDMGYAVAPHHSGVYPVHVQLYEAWKQVWSIRVTSTEEYPHLKPARYRRGFIHNGIMVLPRQTCGLFTHTIFYNEYPGGSSELDKIINGGELFLTVLLNPISIFMTHLSNYGNDRLGLYTFKHLVRFLHSWTNLRLQTLPPVQLAQKYFQIFSEEKDPLWQDPCEDKRHKDIWSKEKTCDRFPKLLIIGPQKTGTTALYLFLGMHPDLSSNYPSSETFEEIQFFNGHNYHKGIDWYMEFFPIPSNTTSDFYFEKSANYFDSEVAPRRAAALLPKAKVLTILINPADRAYSWYQHQRAHDDPVALKYTFHEVITAGSDASSKLRALQNRCLVPGWYATHIERWLSAYHANQILVLDGKLLRTEPAKVMDMVQKFLGVTNTIDYHKTLAFDPKKGFWCQLLEGGKTKCLGKSKGRKYPEMDLDSRAFLKDYYRDHNIELSKLLYKMGQTLPTWLREDLQNTR.

The Cytoplasmic segment spans residues 1 to 17; it reads MPALACLRRLCRHVSPQ. Positions 1-169 are sufficient for localization to Golgi membrane; sequence MPALACLRRL…VAYGVGIIGF (169 aa). Residues 18–39 traverse the membrane as a helical; Signal-anchor for type II membrane protein segment; sequence AVLFLLFIFCLFSVFISAYYLY. A heparan sulfate N-deacetylase 1 region spans residues 40–598; it reads GWKRGLEPSA…KRHKDIWSKE (559 aa). The Lumenal portion of the chain corresponds to 40–882; it reads GWKRGLEPSA…WLREDLQNTR (843 aa). Asparagine 231, asparagine 351, and asparagine 401 each carry an N-linked (GlcNAc...) asparagine glycan. The heparan sulfate N-sulfotransferase 1 stretch occupies residues 599-882; it reads KTCDRFPKLL…WLREDLQNTR (284 aa). The active-site For sulfotransferase activity is lysine 614. 614–618 lines the adenosine 3',5'-bisphosphate pocket; the sequence is KTGTT. An N-linked (GlcNAc...) asparagine glycan is attached at asparagine 667. Positions 712 and 817 each coordinate adenosine 3',5'-bisphosphate. The cysteines at positions 818 and 828 are disulfide-linked. Position 833–837 (833–837) interacts with adenosine 3',5'-bisphosphate; it reads KGRKY.

This sequence belongs to the sulfotransferase 1 family. NDST subfamily. As to quaternary structure, monomer. Interacts with heparan sulfate co-polymerase subunits EXT1 and EXT2. Interacts with NDST1 isoform 3. In terms of assembly, interacts with heparan sulfate co-polymerase subunits EXT1 and EXT2. Interacts with NDST1 isoform 1. As to expression, widely expressed. Expression is most abundant in heart, liver and pancreas.

It is found in the golgi apparatus. Its subcellular location is the trans-Golgi network membrane. The protein localises to the cis-Golgi network membrane. The catalysed reaction is N-acetyl-alpha-D-glucosaminyl-[heparan sulfate](n) + H2O = alpha-D-glucosaminyl-[heparan sulfate](n) + acetate. It catalyses the reaction alpha-D-glucosaminyl-[heparan sulfate](n) + 3'-phosphoadenylyl sulfate = N-sulfo-alpha-D-glucosaminyl-[heparan sulfate](n) + adenosine 3',5'-bisphosphate + 2 H(+). It participates in glycan metabolism; heparan sulfate biosynthesis. Its pathway is glycan metabolism; heparin biosynthesis. Functionally, essential bifunctional enzyme that catalyzes both the N-deacetylation and the N-sulfation of glucosamine (GlcNAc) of the glycosaminoglycan in heparan sulfate. Modifies the GlcNAc-GlcA disaccharide repeating sugar backbone to make N-sulfated heparosan, a prerequisite substrate for later modifications in heparin biosynthesis. Plays a role in determining the extent and pattern of sulfation of heparan sulfate. Participates in biosynthesis of heparan sulfate that can ultimately serve as L-selectin ligands, thereby playing a role in inflammatory response. Required for the exosomal release of SDCBP, CD63 and syndecan. In terms of biological role, lacks both N-deacetylase and N-sulfotransferase activities. Acts as a dominant negative on isoform 1, likely by changing the composition of enzyme complexes responsible for elongation and modification of heparan sulfates. This chain is Bifunctional heparan sulfate N-deacetylase/N-sulfotransferase 1, found in Homo sapiens (Human).